The chain runs to 374 residues: LIM domain-binding protein 1-A (374 aa).

Disordered regions lie at residues 1-24 (MLDR…IGRH), 249-297 (PPAE…ALSS), and 322-374 (TRLE…QSSQ). Residues 267–297 (SGGSTMSSGGGNNNNSNSKKKSPASSFALSS) show a composition bias toward low complexity. Residues 299 to 338 (DVMVVGEPTLMGGEFGDEDERLITRLENTQFDAANGIDDE) form the LIM interaction domain (LID) domain. The segment covering 341-374 (FNSSPTMGTNSPWNSKAPSSQQGKNDNPSSQSSQ) has biased composition (polar residues).

It belongs to the LDB family. Expressed ubiquitously in the embryo and adult.

Its subcellular location is the nucleus. Functionally, binds to the LIM domain of a wide variety of LIM domain-containing transcription factors. This is LIM domain-binding protein 1-A (ldb1a) from Danio rerio (Zebrafish).